The chain runs to 237 residues: Large ribosomal subunit protein uL1 (237 aa).

It belongs to the universal ribosomal protein uL1 family. As to quaternary structure, part of the 50S ribosomal subunit.

Its function is as follows. Binds directly to 23S rRNA. The L1 stalk is quite mobile in the ribosome, and is involved in E site tRNA release. Functionally, protein L1 is also a translational repressor protein, it controls the translation of the L11 operon by binding to its mRNA. In Thermosynechococcus vestitus (strain NIES-2133 / IAM M-273 / BP-1), this protein is Large ribosomal subunit protein uL1.